Reading from the N-terminus, the 240-residue chain is Homeobox protein notochord (240 aa).

The segment covering 1-13 (MSSPAPSGTQVQP) has biased composition (polar residues). 2 disordered regions span residues 1–21 (MSSP…PCPG) and 208–240 (QKLK…GIGS). The homeobox DNA-binding region spans 149–208 (TKRVRTTFNLQQLQELEKVFAKQHNLVGKERAQLAARLHLTENQVRIWFQNRRVKYQKQQ). Over residues 213–225 (PSSSVMEEPSSSS) the composition is skewed to low complexity.

The protein resides in the nucleus. Transcription factor that controls node morphogenesis. Acts downstream of both FOXA2 and Brachyury (T) during notochord development. Is essential for cilia formation in the posterior notochord (PNC) and for left-right patterning; acts upstream of FOXJ1 and RFX3 in this process and is required for the expression of various components important for axonemal assembly and function. Plays a role in regulating axial versus paraxial cell fate. Activates the transcription of ciliary proteins C11orf97 homolog, FAM183B and SPACA9 in the embryonic ventral node. This Mus musculus (Mouse) protein is Homeobox protein notochord (Noto).